Consider the following 913-residue polypeptide: Alanine--tRNA ligase (913 aa).

4 residues coordinate Zn(2+): H600, H604, C703, and H707.

This sequence belongs to the class-II aminoacyl-tRNA synthetase family. It depends on Zn(2+) as a cofactor.

It is found in the cytoplasm. The enzyme catalyses tRNA(Ala) + L-alanine + ATP = L-alanyl-tRNA(Ala) + AMP + diphosphate. Its function is as follows. Catalyzes the attachment of alanine to tRNA(Ala) in a two-step reaction: alanine is first activated by ATP to form Ala-AMP and then transferred to the acceptor end of tRNA(Ala). Also edits incorrectly charged Ser-tRNA(Ala) and Gly-tRNA(Ala) via its editing domain. The sequence is that of Alanine--tRNA ligase from Methanothrix thermoacetophila (strain DSM 6194 / JCM 14653 / NBRC 101360 / PT) (Methanosaeta thermophila).